The chain runs to 430 residues: Glutamate-1-semialdehyde 2,1-aminomutase (430 aa).

At Lys265 the chain carries N6-(pyridoxal phosphate)lysine.

It belongs to the class-III pyridoxal-phosphate-dependent aminotransferase family. HemL subfamily. Homodimer. It depends on pyridoxal 5'-phosphate as a cofactor.

It is found in the cytoplasm. The catalysed reaction is (S)-4-amino-5-oxopentanoate = 5-aminolevulinate. It functions in the pathway porphyrin-containing compound metabolism; protoporphyrin-IX biosynthesis; 5-aminolevulinate from L-glutamyl-tRNA(Glu): step 2/2. This is Glutamate-1-semialdehyde 2,1-aminomutase from Helicobacter pylori (strain HPAG1).